The primary structure comprises 138 residues: Succinate dehydrogenase assembly factor 4, mitochondrial (138 aa).

A mitochondrion-targeting transit peptide spans M1–K32. Polar residues predominate over residues Q71–F98. A disordered region spans residues Q71–F138.

The protein belongs to the SDHAF4 family. As to quaternary structure, interacts with SDH1 in its FAD-bound form.

Its subcellular location is the mitochondrion matrix. Plays an essential role in the assembly of succinate dehydrogenase (SDH), an enzyme complex (also referred to as respiratory complex II) that is a component of both the tricarboxylic acid (TCA) cycle and the mitochondrial electron transport chain, and which couples the oxidation of succinate to fumarate with the reduction of ubiquinone (coenzyme Q) to ubiquinol. Binds to the flavoprotein subunit SDH1 in its FAD-bound form, blocking the generation of excess reactive oxygen species (ROS) and facilitating its assembly with the iron-sulfur protein subunit SDH2 into the SDH catalytic dimer. The protein is Succinate dehydrogenase assembly factor 4, mitochondrial of Saccharomyces cerevisiae (strain ATCC 204508 / S288c) (Baker's yeast).